Here is a 107-residue protein sequence, read N- to C-terminus: uncharacterized protein (107 aa).

A helical membrane pass occupies residues 9-31; the sequence is AAAIITAPTILAMMSTVLRALIF.

Its subcellular location is the membrane. This is an uncharacterized protein from Archaeoglobus fulgidus (strain ATCC 49558 / DSM 4304 / JCM 9628 / NBRC 100126 / VC-16).